The chain runs to 390 residues: GTPase Obg (390 aa).

In terms of domain architecture, Obg spans 1 to 159 (MKFVDEASIL…RDLLLELMLL (159 aa)). The disordered stretch occupies residues 127 to 147 (NTRFKSSVNRTPRQKTNGTPG). Polar residues predominate over residues 129–145 (RFKSSVNRTPRQKTNGT). An OBG-type G domain is found at 160 to 333 (ADVGMLGMPN…LCWDVMTFII (174 aa)). GTP-binding positions include 166–173 (GMPNAGKS), 191–195 (FTTLV), 213–216 (DIPG), 283–286 (NKID), and 314–316 (SAA). Residues Ser-173 and Thr-193 each contribute to the Mg(2+) site.

The protein belongs to the TRAFAC class OBG-HflX-like GTPase superfamily. OBG GTPase family. In terms of assembly, monomer. Mg(2+) is required as a cofactor.

It is found in the cytoplasm. In terms of biological role, an essential GTPase which binds GTP, GDP and possibly (p)ppGpp with moderate affinity, with high nucleotide exchange rates and a fairly low GTP hydrolysis rate. Plays a role in control of the cell cycle, stress response, ribosome biogenesis and in those bacteria that undergo differentiation, in morphogenesis control. The polypeptide is GTPase Obg (Salmonella gallinarum (strain 287/91 / NCTC 13346)).